Here is a 322-residue protein sequence, read N- to C-terminus: Germ cell-specific gene 1-like protein (322 aa).

Over 1-8 the chain is Cytoplasmic; sequence MELSRRNR. Residues 9–29 form a helical membrane-spanning segment; that stretch reads SLLSVVLNLLALSFSVAAFFT. Residues 30–125 are Extracellular-facing; it reads SYWCEGTHKV…IELSPDSEKG (96 aa). A helical transmembrane segment spans residues 126–146; the sequence is VLWLSVISEFLYIILLSLGFL. The Cytoplasmic portion of the chain corresponds to 147-166; that stretch reads LMCLEFFSSSNFIDGLKINA. A helical membrane pass occupies residues 167-187; that stretch reads FAAIITVLSGLLGMVAHMMYM. The Extracellular segment spans residues 188–209; sequence TVFQVTVNLGPKDWRPQTWYYG. A helical transmembrane segment spans residues 210-230; that stretch reads WSFGLAWLSFTLCMSASVLTL. Residues 231–322 lie on the Cytoplasmic side of the membrane; the sequence is NTYTKTILEF…MDLEDDGDQC (92 aa).

Belongs to the GSG1 family. Component of the AMPAR complex.

The protein localises to the cell membrane. Its subcellular location is the synapse. Its function is as follows. As a component of the AMPAR complex, modifies AMPA receptor (AMPAR) gating. The protein is Germ cell-specific gene 1-like protein (gsg1l) of Xenopus tropicalis (Western clawed frog).